We begin with the raw amino-acid sequence, 417 residues long: Methyltransferase/ribosomally synthesized cyclic peptide dendrothelin A precursor dbihMA (417 aa).

Residues M1–K251 are methyltransferase domain. Active-site residues include R72, Y76, and Y98. Positions 98, 100, 103, 130, 172, 213, 244, and 245 each coordinate S-adenosyl-L-methionine. Residues A252–M378 form a clasp domain region. A precursor leader region spans residues P379–P399. V401 and V403 each carry N-methylvaline. N-methylthreonine is present on T404. An N-methylglycine modification is found at G405. An N-methylisoleucine modification is found at I406. Position 407 is an N-methylvaline (V407). G408 is subject to N-methylglycine. At I410 the chain carries N-methylisoleucine. Position 411 is an N-methylglycine (G411). N-methylvaline is present on V413.

In the N-terminal section; belongs to the precorrin methyltransferase family. As to quaternary structure, homodimer. Post-translationally, dbiMA automethylates at Val-401, Val-403, Thr-404, Gly-405, Ile-406, Val-407, Gly-408, Ile-410, Gly-411 and Val-413 before being processed by the prolyloligopeptidase dbiP which likely forms a peptidyl ester upon removal of the follower propeptide, which then undergoes macrocyclization with the N-terminus of the modified core peptide. Peptide backbone alpha-N-methylations change the physicochemical properties of amide bonds to provide structural constraints and other favorable characteristics including biological membrane permeability to peptides.

The protein operates within mycotoxin biosynthesis. Functionally, fusion protein of the methyltransferase dbiM and the dendrothelin core peptide; part of the gene cluster that mediates the biosynthesis of dendrothelin A, a highly methylated cyclic dodecapeptide showing slight nematodicidal activity. Dendrothelin A derives from the C-terminus of the dbiMA protein, and it is the dbiMA protein that methylates its own C-terminus using S-adenosyl methionine (SAM). The C-terminus is subsequently cleaved off and macrocyclized by the prolyloligopeptidase dbiP to give the final product. This chain is Methyltransferase/ribosomally synthesized cyclic peptide dendrothelin A precursor dbihMA, found in Dendrothele bispora (strain CBS 962.96).